The sequence spans 924 residues: Translation initiation factor IF-2 (924 aa).

Residues Pro-118–Leu-325 are disordered. Composition is skewed to pro residues over residues Ala-150 to Arg-173 and Ile-192 to Ser-201. Positions Ala-202–Gly-212 are enriched in low complexity. Positions Arg-229–Gly-295 are enriched in gly residues. The segment covering Arg-299–Lys-308 has biased composition (basic residues). The 172-residue stretch at Val-420–Leu-591 folds into the tr-type G domain. The tract at residues Gly-429–Thr-436 is G1. Gly-429–Thr-436 is a GTP binding site. The interval Gly-454–His-458 is G2. Positions Asp-479–Gly-482 are G3. GTP is bound by residues Asp-479–His-483 and Asn-533–Asp-536. A G4 region spans residues Asn-533 to Asp-536. The tract at residues Ser-569 to Lys-571 is G5.

The protein belongs to the TRAFAC class translation factor GTPase superfamily. Classic translation factor GTPase family. IF-2 subfamily.

It is found in the cytoplasm. In terms of biological role, one of the essential components for the initiation of protein synthesis. Protects formylmethionyl-tRNA from spontaneous hydrolysis and promotes its binding to the 30S ribosomal subunits. Also involved in the hydrolysis of GTP during the formation of the 70S ribosomal complex. This chain is Translation initiation factor IF-2, found in Mycobacterium leprae (strain Br4923).